The chain runs to 508 residues: Photosystem II CP47 reaction center protein (508 aa).

A run of 6 helical transmembrane segments spans residues 21–36 (SVHI…WAGS), 101–115 (IVFS…IWHW), 140–156 (GIHL…FGAF), 203–218 (IAAG…FHLS), 237–252 (VLSS…AFVV), and 457–472 (SFAL…HGAR).

It belongs to the PsbB/PsbC family. PsbB subfamily. In terms of assembly, PSII is composed of 1 copy each of membrane proteins PsbA, PsbB, PsbC, PsbD, PsbE, PsbF, PsbH, PsbI, PsbJ, PsbK, PsbL, PsbM, PsbT, PsbX, PsbY, PsbZ, Psb30/Ycf12, at least 3 peripheral proteins of the oxygen-evolving complex and a large number of cofactors. It forms dimeric complexes. Binds multiple chlorophylls. PSII binds additional chlorophylls, carotenoids and specific lipids. serves as cofactor.

Its subcellular location is the plastid. The protein resides in the chloroplast thylakoid membrane. Functionally, one of the components of the core complex of photosystem II (PSII). It binds chlorophyll and helps catalyze the primary light-induced photochemical processes of PSII. PSII is a light-driven water:plastoquinone oxidoreductase, using light energy to abstract electrons from H(2)O, generating O(2) and a proton gradient subsequently used for ATP formation. This chain is Photosystem II CP47 reaction center protein, found in Arabis hirsuta (Hairy rock-cress).